The chain runs to 307 residues: Major immediate early protein (307 aa).

An RING-type zinc finger spans residues 39–92; sequence CAVCLETYCVQSNNIIDFLMPSECTHLFCYKCVLNMYKNAMNVPRAAVSCPMCN.

The sequence is that of Major immediate early protein (PE38) from Orgyia pseudotsugata multicapsid polyhedrosis virus (OpMNPV).